A 159-amino-acid polypeptide reads, in one-letter code: Transcriptional repressor NrdR (159 aa).

Residues Met1–Ser11 are compositionally biased toward polar residues. The interval Met1–Ser21 is disordered. A zinc finger lies at Cys3–Cys34. The 91-residue stretch at Val49–Asp139 folds into the ATP-cone domain.

It belongs to the NrdR family. It depends on Zn(2+) as a cofactor.

Its function is as follows. Negatively regulates transcription of bacterial ribonucleotide reductase nrd genes and operons by binding to NrdR-boxes. This Prochlorococcus marinus (strain MIT 9301) protein is Transcriptional repressor NrdR.